We begin with the raw amino-acid sequence, 356 residues long: Histidinol-phosphate aminotransferase (356 aa).

K217 carries the N6-(pyridoxal phosphate)lysine modification.

The protein belongs to the class-II pyridoxal-phosphate-dependent aminotransferase family. Histidinol-phosphate aminotransferase subfamily. In terms of assembly, homodimer. Pyridoxal 5'-phosphate serves as cofactor.

The enzyme catalyses L-histidinol phosphate + 2-oxoglutarate = 3-(imidazol-4-yl)-2-oxopropyl phosphate + L-glutamate. The protein operates within amino-acid biosynthesis; L-histidine biosynthesis; L-histidine from 5-phospho-alpha-D-ribose 1-diphosphate: step 7/9. The chain is Histidinol-phosphate aminotransferase from Chromobacterium violaceum (strain ATCC 12472 / DSM 30191 / JCM 1249 / CCUG 213 / NBRC 12614 / NCIMB 9131 / NCTC 9757 / MK).